We begin with the raw amino-acid sequence, 266 residues long: Energy-coupling factor transporter transmembrane protein EcfT 1 (266 aa).

A run of 5 helical transmembrane segments spans residues 33 to 53 (IGILFLANNWWTYALMVLFTL), 73 to 93 (LIWLILFTVVMQILFASGGTI), 107 to 127 (LLNGVFVFLRFVLIIIMSTVI), 152 to 172 (VPVNDIALMISVALRFIPTLM), and 243 to 263 (HFGDLIAACVMILLTAGLVIL).

Belongs to the energy-coupling factor EcfT family. As to quaternary structure, forms a stable energy-coupling factor (ECF) transporter complex composed of 2 membrane-embedded substrate-binding proteins (S component), 2 ATP-binding proteins (A component) and 2 transmembrane proteins (T component). May be able to interact with more than 1 S component at a time.

The protein localises to the cell membrane. Transmembrane (T) component of an energy-coupling factor (ECF) ABC-transporter complex. Unlike classic ABC transporters this ECF transporter provides the energy necessary to transport a number of different substrates. This Listeria monocytogenes serotype 1/2a (strain 08-5578) protein is Energy-coupling factor transporter transmembrane protein EcfT 1.